We begin with the raw amino-acid sequence, 876 residues long: GRB2-associated and regulator of MAPK protein (876 aa).

The CABIT stretch occupies residues 12–320; it reads KDVKWSPVAM…HQVKGDMWPE (309 aa). Y105 carries the phosphotyrosine modification. Residues 427 to 448 are disordered; sequence GDSGSDYLFPEANEESAGIPGK. Y453 carries the post-translational modification Phosphotyrosine. 2 disordered regions span residues 460–501 and 530–572; these read EGKP…ATLG and LNAP…SYYS. The tract at residues 498-550 is necessary for interaction with GRB2; sequence ATLGATIKSSEIALPPPPVPPKSEAVREECRLLNAPPVPPRSAKPLSTSPSIP. Positions 560 to 572 are enriched in polar residues; that stretch reads QTRSPSPTLSYYS. S609 and S613 each carry phosphoserine. Composition is skewed to polar residues over residues 630 to 639 and 647 to 657; these read SGASENQTRS and RSYSYPRQKTP. Disordered stretches follow at residues 630-664 and 722-759; these read SGAS…KRTC and CPAL…TAGS. The SAM domain occupies 811–876; the sequence is LSIEEVSKSL…QFINGWRPKI (66 aa).

Belongs to the GAREM family. As to quaternary structure, interacts with EGFR. Interacts (via proline-rich domain and phosphorylated at Tyr-105 and Tyr-453) with GRB2 (via SH3 domains); the interaction occurs upon EGF stimulation. Interacts (phosphorylated at Tyr-453) with PTPN11; the interaction increases MAPK/ERK activity and does not affect the GRB2/SOS complex formation. Post-translationally, on EGF stimulation, phosphorylated on Tyr-105 and Tyr-453.

Functionally, acts as an adapter protein that plays a role in intracellular signaling cascades triggered either by the cell surface activated epidermal growth factor receptor and/or cytoplasmic protein tyrosine kinases. Promotes activation of the MAPK/ERK signaling pathway. Plays a role in the regulation of cell proliferation. In Mus musculus (Mouse), this protein is GRB2-associated and regulator of MAPK protein (Garem1).